Here is a 255-residue protein sequence, read N- to C-terminus: S-adenosyl-L-methionine-dependent uroporphyrinogen III methyltransferase (255 aa).

S-adenosyl-L-homocysteine-binding positions include Pro15, Gly91–Asp93, Thr121–Ser122, Met175, and Ala232.

Belongs to the precorrin methyltransferase family. In terms of assembly, homodimer.

It carries out the reaction uroporphyrinogen III + 2 S-adenosyl-L-methionine = precorrin-2 + 2 S-adenosyl-L-homocysteine + H(+). The protein operates within porphyrin-containing compound metabolism; siroheme biosynthesis; precorrin-2 from uroporphyrinogen III: step 1/1. Functionally, involved in the archaeal biosynthesis of heme. Catalyzes the methylation of carbons 2 and 7 of uroporphyrinogen-III (UROGEN) to yield precorrin-2. It does not catalyze the overmethylation of precorrin-2 to trimethylpyrrocorphin. This is S-adenosyl-L-methionine-dependent uroporphyrinogen III methyltransferase from Methanosarcina barkeri (strain Fusaro / DSM 804).